We begin with the raw amino-acid sequence, 319 residues long: Acetyl-coenzyme A carboxylase carboxyl transferase subunit alpha (319 aa).

The CoA carboxyltransferase C-terminal domain occupies 35–296 (DLEKEIKQLE…KQRLLEQLKE (262 aa)).

It belongs to the AccA family. As to quaternary structure, acetyl-CoA carboxylase is a heterohexamer composed of biotin carboxyl carrier protein (AccB), biotin carboxylase (AccC) and two subunits each of ACCase subunit alpha (AccA) and ACCase subunit beta (AccD).

It is found in the cytoplasm. It carries out the reaction N(6)-carboxybiotinyl-L-lysyl-[protein] + acetyl-CoA = N(6)-biotinyl-L-lysyl-[protein] + malonyl-CoA. Its pathway is lipid metabolism; malonyl-CoA biosynthesis; malonyl-CoA from acetyl-CoA: step 1/1. In terms of biological role, component of the acetyl coenzyme A carboxylase (ACC) complex. First, biotin carboxylase catalyzes the carboxylation of biotin on its carrier protein (BCCP) and then the CO(2) group is transferred by the carboxyltransferase to acetyl-CoA to form malonyl-CoA. The sequence is that of Acetyl-coenzyme A carboxylase carboxyl transferase subunit alpha from Aliivibrio fischeri (strain MJ11) (Vibrio fischeri).